Reading from the N-terminus, the 178-residue chain is PEST proteolytic signal-containing nuclear protein (178 aa).

Residues methionine 1–glutamine 15 show a composition bias toward basic and acidic residues. Residues methionine 1–lysine 82 form a disordered region. Position 2 is an N-acetylalanine (alanine 2). The segment covering serine 37 to arginine 47 has biased composition (low complexity). Serine 53 is subject to Phosphoserine. Position 64 is an N6-acetyllysine (lysine 64). Phosphoserine occurs at positions 77, 87, and 119. The interval asparagine 134–asparagine 158 is disordered. The residue at position 139 (threonine 139) is a Phosphothreonine. Residues threonine 139–asparagine 149 show a composition bias toward polar residues. Serine 147 bears the Phosphoserine mark. 2 positions are modified to N6-acetyllysine: lysine 150 and lysine 152.

Interacts with UHRF2/NIRF. Post-translationally, ubiquitinated; mediated by UHRF2 and leading to its subsequent proteasomal degradation. In terms of processing, N-terminally acetylated in a HYPK-dependent manner by the NatA acetyltransferase complex which is composed of NAA10 and NAA15.

The protein localises to the nucleus. Its function is as follows. May be involved in cell cycle regulation. The polypeptide is PEST proteolytic signal-containing nuclear protein (Pcnp) (Mus musculus (Mouse)).